The following is a 253-amino-acid chain: Probable transcriptional regulatory protein SynRCC307_1833 (253 aa).

It belongs to the TACO1 family.

The protein localises to the cytoplasm. In Synechococcus sp. (strain RCC307), this protein is Probable transcriptional regulatory protein SynRCC307_1833.